A 345-amino-acid chain; its full sequence is Phosphoribosylformylglycinamidine cyclo-ligase (345 aa).

It belongs to the AIR synthase family.

The protein localises to the cytoplasm. It catalyses the reaction 2-formamido-N(1)-(5-O-phospho-beta-D-ribosyl)acetamidine + ATP = 5-amino-1-(5-phospho-beta-D-ribosyl)imidazole + ADP + phosphate + H(+). Its pathway is purine metabolism; IMP biosynthesis via de novo pathway; 5-amino-1-(5-phospho-D-ribosyl)imidazole from N(2)-formyl-N(1)-(5-phospho-D-ribosyl)glycinamide: step 2/2. In Shewanella putrefaciens (strain CN-32 / ATCC BAA-453), this protein is Phosphoribosylformylglycinamidine cyclo-ligase.